The sequence spans 2339 residues: Voltage-dependent N-type calcium channel subunit alpha-1B (2339 aa).

The tract at residues 1-37 (MVRFGDELGGRYGGPGGGERARGGGAGGAGGPGPGGL) is disordered. The Cytoplasmic segment spans residues 1–90 (MVRFGDELGG…DNVVRKYAKR (90 aa)). Gly residues predominate over residues 10-37 (GRYGGPGGGERARGGGAGGAGGPGPGGL). Arg-22 carries the post-translational modification Omega-N-methylarginine. One copy of the I repeat lies at 82 to 359 (NVVRKYAKRI…LVLGVLSGEF (278 aa)). A helical transmembrane segment spans residues 91–114 (ITEWPPFEYMILATIIANCIVLAL). Residues 115–131 (EQHLPDGDKTPMSERLD) lie on the Extracellular side of the membrane. Residues 132-152 (DTEPYFIGIFCFEAGIKIIAL) form a helical membrane-spanning segment. Residues 153-163 (GFVFHKGSYLR) lie on the Cytoplasmic side of the membrane. A helical membrane pass occupies residues 164 to 182 (NGWNVMDFVVVLTGILATA). Residues 183–187 (GTDFD) are Extracellular-facing. The helical transmembrane segment at 188–211 (LRTLRAVRVLRPLKLVSGIPSLQV) threads the bilayer. Residues 212-221 (VLKSIMKAMV) are Cytoplasmic-facing. Residues 222 to 244 (PLLQIGLLLFFAILMFAIIGLEF) traverse the membrane as a helical segment. The Extracellular portion of the chain corresponds to 245–331 (YMGKFHKACF…NTNDAAGNTW (87 aa)). The N-linked (GlcNAc...) asparagine glycan is linked to Asn-256. The chain crosses the membrane as a helical span at residues 332 to 356 (NWLYFIPLIIIGSFFMLNLVLGVLS). Residues 357–482 (GEFAKERERV…FFIRRMVKAQ (126 aa)) are Cytoplasmic-facing. The tract at residues 379 to 396 (QQIERELNGYLEWIFKAE) is binding to the beta subunit. Residue Ser-411 is modified to Phosphoserine. ATP is bound at residue 451 to 458 (ASLKSGKT). One copy of the II repeat lies at 468–712 (EKMFRFFIRR…VFLAIAVDNL (245 aa)). Residues 483 to 501 (SFYWVVLCVVALNTLCVAM) traverse the membrane as a helical segment. At 502-511 (VHYNQPRRLT) the chain is on the extracellular side. A helical membrane pass occupies residues 512 to 534 (TTLYFAEFVFLGLFLTEMSLKMY). Over 535–544 (GLGPRSYFRS) the chain is Cytoplasmic. Residue Ser-544 participates in a 1,2-diacyl-sn-glycero-3-phospho-(1D-myo-inositol-4,5-bisphosphate) binding. The chain crosses the membrane as a helical span at residues 545–566 (SFNCFDFGVIVGSVFEVVWAAI). Residues 567–573 (KPGSSFG) lie on the Extracellular side of the membrane. The helical transmembrane segment at 574-586 (ISVLRALRLLRIF) threads the bilayer. Arg-584 and Lys-587 together coordinate a 1,2-diacyl-sn-glycero-3-phospho-(1D-myo-inositol-4,5-bisphosphate). Topologically, residues 587–604 (KVTKYWSSLRNLVVSLLN) are cytoplasmic. The chain crosses the membrane as a helical span at residues 605 to 630 (SMKSIISLLFLLFLFIVVFALLGMQL). Topologically, residues 631-682 (FGGQFNFQDETPTTNFDTFPAAILTVFQILTGEDWNAVMYHGIESQGGVSKG) are extracellular. A helical transmembrane segment spans residues 683–709 (MFSSFYFIVLTLFGNYTLLNVFLAIAV). At 710-1151 (DNLANAQELT…FCHYIVTMRY (442 aa)) the chain is on the cytoplasmic side. Residues Ser-745, Ser-748, and Ser-783 each carry the phosphoserine modification. 4 stretches are compositionally biased toward basic and acidic residues: residues 816–826 (PLVVELGRDGA), 857–886 (KDKT…EERP), 922–932 (GSPEEAAEREP), and 965–976 (GPREAESGEEPA). Disordered stretches follow at residues 816 to 1038 (PLVV…VTVG) and 1054 to 1076 (QPED…DPNT). Residues 977–986 (RRHRARHKAQ) show a composition bias toward basic residues. Residues 990–1029 (EAVEKETTEKEATEKEAEIVEADKEKELRNHQPREPHCDL) show a composition bias toward basic and acidic residues. Ser-1069 carries the post-translational modification Phosphoserine. The III repeat unit spans residues 1137–1419 (NLLRRFCHYI…IFVALIIITF (283 aa)). The chain crosses the membrane as a helical span at residues 1152-1170 (FEVVILVVIALSSIALAAE). Residues 1171 to 1178 (DPVRTDSP) are Extracellular-facing. A helical transmembrane segment spans residues 1179-1203 (RNNALKYLDYIFTGVFTFEMVIKMI). Topologically, residues 1204-1217 (DLGLLLHPGAYFRD) are cytoplasmic. A helical transmembrane segment spans residues 1218–1238 (LWNILDFIVVSGALVAFAFSG). Residues 1239 to 1244 (SKGKDI) are Extracellular-facing. Residues 1245 to 1265 (NTIKSLRVLRVLRPLKTIKRL) form a helical membrane-spanning segment. Over 1266 to 1283 (PKLKAVFDCVVNSLKNVL) the chain is Cytoplasmic. A helical membrane pass occupies residues 1284–1303 (NILIVYMLFMFIFAVIAVQL). The Extracellular segment spans residues 1304–1390 (FKGKFFYCTD…EQGPSPGYRM (87 aa)). The helical transmembrane segment at 1391 to 1416 (ELSIFYVVYFVVFPFFFVNIFVALII) threads the bilayer. Residues 1417-1471 (ITFQEQGDKVMSECSLEKNERACIDFAISAKPLTRYMPQNRQSFQYKTWTFVVSP) are Cytoplasmic-facing. An IV repeat occupies 1456–1711 (NRQSFQYKTW…LFVAVIMDNF (256 aa)). The chain crosses the membrane as a helical span at residues 1472–1490 (PFEYFIMAMIALNTVVLMM). Residues 1491 to 1498 (KFYDAPYE) are Extracellular-facing. Residues 1499-1523 (YELMLKCLNIVFTSMFSMECVLKII) traverse the membrane as a helical segment. Topologically, residues 1524-1533 (AFGVLNYFRD) are cytoplasmic. The helical transmembrane segment at 1534–1555 (AWNVFDFVTVLGSITDILVTEI) threads the bilayer. Topologically, residues 1556-1563 (AETNNFIN) are extracellular. N-linked (GlcNAc...) asparagine glycosylation is present at Asn-1563. A helical membrane pass occupies residues 1564-1582 (LSFLRLFRAARLIKLLRQG). The Cytoplasmic segment spans residues 1583 to 1601 (YTIRILLWTFVQSFKALPY). Residues 1602 to 1621 (VCLLIAMLFFIYAIIGMQVF) form a helical membrane-spanning segment. Topologically, residues 1622–1683 (GNIALDDDTS…ANATECGSDF (62 aa)) are extracellular. N-linked (GlcNAc...) asparagine glycosylation is present at Asn-1675. The helical transmembrane segment at 1684-1707 (AYFYFVSFIFLCSFLMLNLFVAVI) threads the bilayer. At 1708–2339 (MDNFEYLTRD…YHHPDQDHWC (632 aa)) the chain is on the cytoplasmic side. Residues 1724–1759 (HHLDEFIRVWAEYDPAACGRISYNDMFEMLKHMSPP) enclose the EF-hand domain. 3 residues coordinate Ca(2+): Asp-1737, Arg-1743, and Asp-1748. Residues 1916 to 1931 (SSTSLSNGGAIQNQES) show a composition bias toward polar residues. Disordered stretches follow at residues 1916 to 1968 (SSTS…VGRS) and 1981 to 2206 (TRRG…YKTA). Residues 1946-1960 (DAPHEARPPLERGHS) show a composition bias toward basic and acidic residues. The span at 2049-2063 (SHHHHHRCHRRRDRK) shows a compositional bias: basic residues. At Ser-2066 the chain carries Phosphoserine. Residues 2098 to 2116 (CRRERERRQERGRSQERRQ) show a composition bias toward basic and acidic residues. The segment covering 2143-2153 (PSLSSHPTSPT) has biased composition (low complexity). The segment covering 2164-2180 (GSGSVNGSPLLSTSGAS) has biased composition (polar residues). 3 positions are modified to phosphoserine: Ser-2224, Ser-2233, and Ser-2256.

The protein belongs to the calcium channel alpha-1 subunit (TC 1.A.1.11) family. CACNA1B subfamily. In terms of assembly, multisubunit complex consisting of alpha-1, alpha-2, beta and delta subunits in a 1:1:1:1 ratio. The channel activity is directed by the pore-forming and voltage-sensitive alpha-1 subunit. In many cases, this subunit is sufficient to generate voltage-sensitive calcium channel activity. The auxiliary subunits beta and alpha-2/delta linked by a disulfide bridge regulate the channel activity. Interacts with RIMS1. Interacts with FMR1 (via C-terminus); this interaction induces a decrease in the number of presynaptic functional CACNA1B channels at the cell surface. Post-translationally, phosphorylated in vitro by CaM-kinase II, PKA, PKC and CGPK. In terms of tissue distribution, isoform Alpha-1b-1 and isoform Alpha-1b-2 are expressed in the central nervous system, but not in skeletal muscle or aorta. Expressed in the cerebral white matter, cortex, hippocampus, basal ganglia, and cerebellum.

The protein resides in the membrane. It catalyses the reaction Ca(2+)(in) = Ca(2+)(out). Is specifically blocked by omega-conotoxin GVIA. Is specifically blocked by omega-conotoxin MVIIA (ziconotide). Is insensitive to dihydropyridines (DHP). Its activity is regulated as follows. Is specifically blocked by omega-conotoxin MVIIA (ziconotide). Is insensitive to dihydropyridines (DHP). Its function is as follows. Voltage-sensitive calcium channels (VSCC) mediate the entry of calcium ions into excitable cells and are also involved in a variety of calcium-dependent processes, including muscle contraction, hormone or neurotransmitter release, gene expression, cell motility, cell division and cell death. This alpha-1B subunit gives rise to N-type calcium currents. N-type calcium channels belong to the 'high-voltage activated' (HVA) group. They are involved in pain signaling. Calcium channels containing alpha-1B subunit may play a role in directed migration of immature neurons. Mediates Ca(2+) release probability at hippocampal neuronal soma and synaptic terminals. Functionally, voltage-sensitive calcium channels (VSCC) mediate the entry of calcium ions into excitable cells and are also involved in a variety of calcium-dependent processes, including muscle contraction, hormone or neurotransmitter release, gene expression, cell motility, cell division and cell death. This alpha-1B subunit gives rise to N-type calcium currents. This chain is Voltage-dependent N-type calcium channel subunit alpha-1B (CACNA1B), found in Homo sapiens (Human).